The primary structure comprises 526 residues: Serine/threonine-protein kinase ppk22 (526 aa).

Disordered regions lie at residues Met-1–Phe-24 and Ala-39–Leu-106. Residues Lys-10–His-23 show a composition bias toward polar residues. Residues Asn-65–Gln-78 are compositionally biased toward low complexity. Ser-154 is modified (phosphoserine). Positions Phe-155–Phe-445 constitute a Protein kinase domain. ATP is bound by residues Leu-161–Val-169 and Lys-184. Catalysis depends on Asp-280, which acts as the Proton acceptor. The residue at position 339 (Thr-339) is a Phosphothreonine. Phosphoserine is present on Ser-341. Residue Tyr-348 is modified to Phosphotyrosine. Residues Arg-446 to Glu-526 form the AGC-kinase C-terminal domain. Residues Met-499–Glu-526 are disordered. The span at His-500 to Thr-519 shows a compositional bias: polar residues.

The protein belongs to the protein kinase superfamily. AGC Ser/Thr protein kinase family.

It localises to the cytoplasm. It catalyses the reaction L-seryl-[protein] + ATP = O-phospho-L-seryl-[protein] + ADP + H(+). It carries out the reaction L-threonyl-[protein] + ATP = O-phospho-L-threonyl-[protein] + ADP + H(+). This chain is Serine/threonine-protein kinase ppk22 (ppk22), found in Schizosaccharomyces pombe (strain 972 / ATCC 24843) (Fission yeast).